The following is a 228-amino-acid chain: 7-cyano-7-deazaguanine synthase (228 aa).

Residue 7-17 (LSGGMDSLVTT) participates in ATP binding. Zn(2+)-binding residues include cysteine 187, cysteine 195, cysteine 198, and cysteine 201.

This sequence belongs to the QueC family. Zn(2+) serves as cofactor.

It carries out the reaction 7-carboxy-7-deazaguanine + NH4(+) + ATP = 7-cyano-7-deazaguanine + ADP + phosphate + H2O + H(+). It participates in purine metabolism; 7-cyano-7-deazaguanine biosynthesis. In terms of biological role, catalyzes the ATP-dependent conversion of 7-carboxy-7-deazaguanine (CDG) to 7-cyano-7-deazaguanine (preQ(0)). This chain is 7-cyano-7-deazaguanine synthase, found in Chlorobium chlorochromatii (strain CaD3).